Consider the following 207-residue polypeptide: Thiamine-phosphate synthase (207 aa).

Residues 38–42 and Asn-70 contribute to the 4-amino-2-methyl-5-(diphosphooxymethyl)pyrimidine site; that span reads QYRAK. The Mg(2+) site is built by Asp-71 and Asp-90. Residue Thr-109 coordinates 4-amino-2-methyl-5-(diphosphooxymethyl)pyrimidine. 135–137 contributes to the 2-[(2R,5Z)-2-carboxy-4-methylthiazol-5(2H)-ylidene]ethyl phosphate binding site; that stretch reads TNS. 4-amino-2-methyl-5-(diphosphooxymethyl)pyrimidine is bound at residue Lys-138. 2-[(2R,5Z)-2-carboxy-4-methylthiazol-5(2H)-ylidene]ethyl phosphate contacts are provided by residues Gly-165 and 185 to 186; that span reads IS.

Belongs to the thiamine-phosphate synthase family. Mg(2+) is required as a cofactor.

It carries out the reaction 2-[(2R,5Z)-2-carboxy-4-methylthiazol-5(2H)-ylidene]ethyl phosphate + 4-amino-2-methyl-5-(diphosphooxymethyl)pyrimidine + 2 H(+) = thiamine phosphate + CO2 + diphosphate. The enzyme catalyses 2-(2-carboxy-4-methylthiazol-5-yl)ethyl phosphate + 4-amino-2-methyl-5-(diphosphooxymethyl)pyrimidine + 2 H(+) = thiamine phosphate + CO2 + diphosphate. It catalyses the reaction 4-methyl-5-(2-phosphooxyethyl)-thiazole + 4-amino-2-methyl-5-(diphosphooxymethyl)pyrimidine + H(+) = thiamine phosphate + diphosphate. The protein operates within cofactor biosynthesis; thiamine diphosphate biosynthesis; thiamine phosphate from 4-amino-2-methyl-5-diphosphomethylpyrimidine and 4-methyl-5-(2-phosphoethyl)-thiazole: step 1/1. In terms of biological role, condenses 4-methyl-5-(beta-hydroxyethyl)thiazole monophosphate (THZ-P) and 2-methyl-4-amino-5-hydroxymethyl pyrimidine pyrophosphate (HMP-PP) to form thiamine monophosphate (TMP). This is Thiamine-phosphate synthase from Clostridium perfringens (strain 13 / Type A).